A 508-amino-acid polypeptide reads, in one-letter code: General transcription factor IIF subunit 1 (508 aa).

An N-acetylalanine modification is found at Ala2. A Phosphothreonine modification is found at Thr156. A disordered region spans residues 177-448 (MQQRRLKDQD…SSGDVQVTED (272 aa)). Residues Ser217, Ser218, Ser221, and Ser224 each carry the phosphoserine modification. Positions 232–251 (SKAKKKAPVTKAGRKKKKKK) are enriched in basic residues. 2 stretches are compositionally biased toward acidic residues: residues 255-270 (DEAF…EGQE) and 303-325 (EQSE…EEEE). At Thr331 the chain carries Phosphothreonine. Positions 343 to 355 (DDSDSSEESDIDS) are enriched in acidic residues. Over residues 364–374 (AKKKTPPKRER) the composition is skewed to basic residues. Phosphoserine occurs at positions 377, 380, 381, and 385. Polar residues predominate over residues 378–388 (GGSSKGTSRPG). Thr389 carries the phosphothreonine modification. The segment covering 389–406 (TPSAEAASTSSTLRAAAS) has biased composition (low complexity). Ser391 is modified (phosphoserine). Residue Lys407 is modified to N6-acetyllysine. Over residues 428-443 (GPQSLSGKSTPSSGDV) the composition is skewed to polar residues. Ser431, Ser433, and Ser436 each carry phosphoserine. Residue Thr437 is modified to Phosphothreonine. Residue Ser440 is modified to Phosphoserine.

The protein belongs to the TFIIF alpha subunit family. As to quaternary structure, heterodimer of an alpha and a beta subunit. Interacts with GTF2F2, CTDP1, TAF6/TAFII80 and URI1. Interacts with GTF2B (via C-terminus and preferentially via acetylated form); this interaction prevents binding of GTF2B to GTF2F2. Part of TBP-based Pol II pre-initiation complex (PIC), in which Pol II core assembles with general transcription factors and other specific initiation factors including GTF2E1, GTF2E2, GTF2F1, GTF2F2, TCEA1, ERCC2, ERCC3, GTF2H2, GTF2H3, GTF2H4, GTF2H5, GTF2A1, GTF2A2, GTF2B and TBP; this large multi-subunit PIC complex mediates DNA unwinding and targets Pol II core to the transcription start site where the first phosphodiester bond forms. Post-translationally, phosphorylated on Ser and other residues by TAF1 and casein kinase II-like kinases.

Its subcellular location is the nucleus. Its function is as follows. TFIIF is a general transcription initiation factor that binds to RNA polymerase II and helps to recruit it to the initiation complex in collaboration with TFIIB. It promotes transcription elongation. The protein is General transcription factor IIF subunit 1 (Gtf2f1) of Rattus norvegicus (Rat).